Consider the following 90-residue polypeptide: uncharacterized protein (90 aa).

The interval 25 to 90 is disordered; sequence GEAAYNSPTN…PPIAPPPILD (66 aa). 2 stretches are compositionally biased toward polar residues: residues 30–54 and 65–79; these read NSPTNNQKSQGTNSSFGDTSPTESV and NDQTSIGNSDTSNVN.

This is an uncharacterized protein from Bacillus subtilis (strain 168).